The sequence spans 117 residues: Large ribosomal subunit protein eL8 (117 aa).

Belongs to the eukaryotic ribosomal protein eL8 family. Part of the 50S ribosomal subunit. Part of the RNase P complex.

The protein resides in the cytoplasm. It catalyses the reaction Endonucleolytic cleavage of RNA, removing 5'-extranucleotides from tRNA precursor.. Its function is as follows. Multifunctional RNA-binding protein that recognizes the K-turn motif in ribosomal RNA, the RNA component of RNase P, box H/ACA, box C/D and box C'/D' sRNAs. Part of ribonuclease P, a protein complex that generates mature tRNA molecules by cleaving their 5'-ends, this subunit dramatically stimulates RNase P activity. The chain is Large ribosomal subunit protein eL8 from Methanococcus maripaludis (strain DSM 14266 / JCM 13030 / NBRC 101832 / S2 / LL).